The sequence spans 485 residues: Glutamate mutase epsilon subunit (485 aa).

An L-glutamate-binding site is contributed by R66. G68 provides a ligand contact to adenosylcob(III)alamin. R100 is a binding site for L-glutamate. N123 serves as a coordination point for adenosylcob(III)alamin. Residues 149–150, E171, and Y177 contribute to the L-glutamate site; that span reads RH. P180 contributes to the adenosylcob(III)alamin binding site. Y181 provides a ligand contact to L-glutamate. Residues F297, K326, E330, and I334 each contribute to the adenosylcob(III)alamin site.

It belongs to the methylaspartate mutase GlmE subunit family. Heterotetramer composed of 2 epsilon subunits (GlmE) and 2 sigma subunits (GlmS). GlmE exists as a homodimer and GlmS as a monomer. Requires adenosylcob(III)alamin as cofactor.

It catalyses the reaction (2S,3S)-3-methyl-L-aspartate = L-glutamate. Its pathway is amino-acid degradation; L-glutamate degradation via mesaconate pathway; acetate and pyruvate from L-glutamate: step 1/4. In terms of biological role, catalyzes the carbon skeleton rearrangement of L-glutamate to L-threo-3-methylaspartate ((2S,3S)-3-methylaspartate). The protein is Glutamate mutase epsilon subunit of Treponema denticola (strain ATCC 35405 / DSM 14222 / CIP 103919 / JCM 8153 / KCTC 15104).